Consider the following 263-residue polypeptide: NH(3)-dependent NAD(+) synthetase (263 aa).

Residue 29 to 36 coordinates ATP; it reads GISGGIDS. Residue Asp35 coordinates Mg(2+). Residue Arg114 participates in deamido-NAD(+) binding. An ATP-binding site is contributed by Thr134. A Mg(2+)-binding site is contributed by Glu139. 2 residues coordinate deamido-NAD(+): Lys147 and Asp154. Lys163 and Ser185 together coordinate ATP. 244 to 245 provides a ligand contact to deamido-NAD(+); the sequence is HK.

It belongs to the NAD synthetase family. As to quaternary structure, homodimer.

The catalysed reaction is deamido-NAD(+) + NH4(+) + ATP = AMP + diphosphate + NAD(+) + H(+). It functions in the pathway cofactor biosynthesis; NAD(+) biosynthesis; NAD(+) from deamido-NAD(+) (ammonia route): step 1/1. Functionally, catalyzes the ATP-dependent amidation of deamido-NAD to form NAD. Uses ammonia as a nitrogen source. In Methanococcoides burtonii (strain DSM 6242 / NBRC 107633 / OCM 468 / ACE-M), this protein is NH(3)-dependent NAD(+) synthetase.